The chain runs to 159 residues: Small ribosomal subunit protein uS13 (159 aa).

The disordered stretch occupies residues 136–159 (QRTRSTGRSGATVGVTRKKTQAKK). Positions 138–149 (TRSTGRSGATVG) are enriched in low complexity.

The protein belongs to the universal ribosomal protein uS13 family. As to quaternary structure, part of the 30S ribosomal subunit. Forms a loose heterodimer with protein S19. Forms two bridges to the 50S subunit in the 70S ribosome.

Its function is as follows. Located at the top of the head of the 30S subunit, it contacts several helices of the 16S rRNA. In the 70S ribosome it contacts the 23S rRNA (bridge B1a) and protein L5 of the 50S subunit (bridge B1b), connecting the 2 subunits; these bridges are implicated in subunit movement. The sequence is that of Small ribosomal subunit protein uS13 from Methanothrix thermoacetophila (strain DSM 6194 / JCM 14653 / NBRC 101360 / PT) (Methanosaeta thermophila).